A 339-amino-acid chain; its full sequence is Methionyl-tRNA formyltransferase (339 aa).

110 to 113 is a (6S)-5,6,7,8-tetrahydrofolate binding site; that stretch reads SLLP.

Belongs to the Fmt family.

It catalyses the reaction L-methionyl-tRNA(fMet) + (6R)-10-formyltetrahydrofolate = N-formyl-L-methionyl-tRNA(fMet) + (6S)-5,6,7,8-tetrahydrofolate + H(+). Functionally, attaches a formyl group to the free amino group of methionyl-tRNA(fMet). The formyl group appears to play a dual role in the initiator identity of N-formylmethionyl-tRNA by promoting its recognition by IF2 and preventing the misappropriation of this tRNA by the elongation apparatus. This Prochlorococcus marinus (strain MIT 9211) protein is Methionyl-tRNA formyltransferase.